The primary structure comprises 372 residues: Solute carrier family 35 member F6 (372 aa).

Positions 1–18 (MAWTKYQLFLAGLMLVTG) are cleaved as a signal peptide. Helical transmembrane passes span 48–68 (FVQA…FYLL) and 89–109 (LLFL…YVAL). The 56-residue stretch at 105–160 (MYVALNMTSASSFQMLRGAVIIFTGLFSVAFLDRRLAPSQWLGILITIAGLVVVGL) folds into the EamA domain. An N-linked (GlcNAc...) asparagine glycan is attached at N110. 7 helical membrane-spanning segments follow: residues 116–136 (SFQM…VAFL), 145–165 (WLGI…DLLS), 176–196 (VITG…QMVL), 211–231 (AVGI…VPMF), 261–281 (LIAL…FSGI), 293–312 (MVLD…ALGW), and 320–336 (ILGF…YNGL). T366 carries the post-translational modification Phosphothreonine.

Belongs to the SLC35F solute transporter family. As to quaternary structure, interacts with SLC25A5.

Its subcellular location is the mitochondrion. It is found in the lysosome membrane. In terms of biological role, involved in the maintenance of mitochondrial membrane potential in pancreatic ductal adenocarcinoma (PDAC) cells. Promotes pancreatic ductal adenocarcinoma (PDAC) cell growth. May play a role as a nucleotide-sugar transporter. The sequence is that of Solute carrier family 35 member F6 (Slc35f6) from Mus musculus (Mouse).